Here is a 309-residue protein sequence, read N- to C-terminus: UDP-N-acetylenolpyruvoylglucosamine reductase (309 aa).

In terms of domain architecture, FAD-binding PCMH-type spans 34-221 (RVGGPAQVLF…TAAREAAQPI (188 aa)). Arginine 179 is a catalytic residue. Serine 228 functions as the Proton donor in the catalytic mechanism. Glutamate 298 is a catalytic residue.

The protein belongs to the MurB family. FAD is required as a cofactor.

It is found in the cytoplasm. The enzyme catalyses UDP-N-acetyl-alpha-D-muramate + NADP(+) = UDP-N-acetyl-3-O-(1-carboxyvinyl)-alpha-D-glucosamine + NADPH + H(+). It functions in the pathway cell wall biogenesis; peptidoglycan biosynthesis. Cell wall formation. The chain is UDP-N-acetylenolpyruvoylglucosamine reductase from Methylorubrum extorquens (strain CM4 / NCIMB 13688) (Methylobacterium extorquens).